Reading from the N-terminus, the 266-residue chain is UPF0294 protein Ent638_0743 (266 aa).

The protein belongs to the UPF0294 family.

The protein localises to the cytoplasm. The chain is UPF0294 protein Ent638_0743 from Enterobacter sp. (strain 638).